The primary structure comprises 363 residues: MEASQVEFEHPRKAFGWAARDSSGLLSPFNFSRRDIGEEDVALEVLYCGICHTDLHMAKNDFGNSIYPYVPGHEVIGIVAEVGSKVEKYKVGDKVGVGYFVESCRSCQNCIDNLENYCPKHILTQGDKHIDGTTTYGGYSDSMVVDEHFVTRIPEGLPLDGCGSSSLCWGYSHSPLKYYGLDKPGLHVGVVGLGGLGHMVAKFAKTHGLKITVISTSPPTKKEEAIKNLGADSFLVSRDPDQMEAPKETLDGIIDTVSADHSIVPLIGLLKSHGKLVLIGAIEKPLELPPFPLILGRKLVGGTLVGGLKETQEMIDFSPKHNVKPEIEVVPMDYVNIAMQRLAKADVKYRFVIDVANTLKPTS.

C51, H73, C104, C107, C110, C118, and C168 together coordinate Zn(2+).

This sequence belongs to the zinc-containing alcohol dehydrogenase family. The cofactor is Zn(2+).

It catalyses the reaction D-mannitol + NAD(+) = D-mannose + NADH + H(+). In terms of biological role, oxidizes mannitol to mannose. Provides the initial step by which translocated mannitol is committed to central metabolism and, by regulating mannitol pool size, is important in regulating salt tolerance at the cellular level. This chain is Probable mannitol dehydrogenase 3 (CAD3), found in Stylosanthes humilis (Townsville stylo).